We begin with the raw amino-acid sequence, 379 residues long: Alkanesulfonate monooxygenase (379 aa).

The protein belongs to the SsuD family.

It carries out the reaction an alkanesulfonate + FMNH2 + O2 = an aldehyde + FMN + sulfite + H2O + 2 H(+). Functionally, catalyzes the desulfonation of aliphatic sulfonates. The polypeptide is Alkanesulfonate monooxygenase (Pseudomonas savastanoi pv. phaseolicola (strain 1448A / Race 6) (Pseudomonas syringae pv. phaseolicola (strain 1448A / Race 6))).